The following is a 458-amino-acid chain: Phosphoglucosamine mutase (458 aa).

The active-site Phosphoserine intermediate is serine 106. Serine 106, aspartate 247, aspartate 249, and aspartate 251 together coordinate Mg(2+). Serine 106 carries the phosphoserine modification.

This sequence belongs to the phosphohexose mutase family. Requires Mg(2+) as cofactor. Activated by phosphorylation.

It carries out the reaction alpha-D-glucosamine 1-phosphate = D-glucosamine 6-phosphate. In terms of biological role, catalyzes the conversion of glucosamine-6-phosphate to glucosamine-1-phosphate. The polypeptide is Phosphoglucosamine mutase (Chlamydia trachomatis serovar L2 (strain ATCC VR-902B / DSM 19102 / 434/Bu)).